The primary structure comprises 156 residues: Endoribonuclease YbeY (156 aa).

Zn(2+) is bound by residues His119, His123, and His129.

The protein belongs to the endoribonuclease YbeY family. The cofactor is Zn(2+).

The protein resides in the cytoplasm. In terms of biological role, single strand-specific metallo-endoribonuclease involved in late-stage 70S ribosome quality control and in maturation of the 3' terminus of the 16S rRNA. This is Endoribonuclease YbeY from Buchnera aphidicola subsp. Cinara cedri (strain Cc).